The following is a 293-amino-acid chain: Capsid protein (293 aa).

The span at 1–14 shows a compositional bias: basic and acidic residues; that stretch reads MSESKAETPSKSAE. The disordered stretch occupies residues 1–49; sequence MSESKAETPSKSAEKGVASLSTSAPPSSTTPTAQAKQTPPPVATTARPM. A compositionally biased stretch (low complexity) spans 18–37; that stretch reads ASLSTSAPPSSTTPTAQAKQ.

It belongs to the potexvirus capsid protein family. As to quaternary structure, interacts with host NbANKr; this interaction targets the capsid protein to the host chloroplast.

The protein resides in the virion. Its subcellular location is the host chloroplast envelope. In terms of biological role, required for genome encapsidation. Forms ribonucleoprotein complexes along with TGB1 helicase and viral RNA. This Lolium latent virus (isolate Lolium/USA/US1/-) (LoLV) protein is Capsid protein (ORF5).